We begin with the raw amino-acid sequence, 124 residues long: MAAELHVELVAADRQVWSGEATLVVARTTSGDIGVMPGHQPLLGVLESGPVTIRTSDGETVVAAVHGGFISFADNKLSLLAEIAELADEIDAQRAERELERAKAEGDATAERRADVRLRAVSAR.

The protein belongs to the ATPase epsilon chain family. F-type ATPases have 2 components, CF(1) - the catalytic core - and CF(0) - the membrane proton channel. CF(1) has five subunits: alpha(3), beta(3), gamma(1), delta(1), epsilon(1). CF(0) has three main subunits: a, b and c.

It is found in the cell membrane. Functionally, produces ATP from ADP in the presence of a proton gradient across the membrane. This chain is ATP synthase epsilon chain, found in Streptomyces avermitilis (strain ATCC 31267 / DSM 46492 / JCM 5070 / NBRC 14893 / NCIMB 12804 / NRRL 8165 / MA-4680).